The chain runs to 320 residues: Malate dehydrogenase (320 aa).

NAD(+)-binding positions include G10–G15 and D34. 2 residues coordinate substrate: R83 and R89. Residues N96 and I119–N121 each bind NAD(+). N121 and R152 together coordinate substrate. The active-site Proton acceptor is the H176.

The protein belongs to the LDH/MDH superfamily. MDH type 3 family.

It carries out the reaction (S)-malate + NAD(+) = oxaloacetate + NADH + H(+). Its function is as follows. Catalyzes the reversible oxidation of malate to oxaloacetate. The protein is Malate dehydrogenase of Bartonella quintana (strain Toulouse) (Rochalimaea quintana).